We begin with the raw amino-acid sequence, 241 residues long: Chaperone protein HifB (241 aa).

Residues 1-27 form the signal peptide; that stretch reads MGKTMFKKTLLFFTALFFTALCAFSAN.

Belongs to the periplasmic pilus chaperone family.

It is found in the periplasm. Functionally, mediates assembly of pili by forming soluble multimeric complexes with pili subunits as an intermediate step in the assembly process. This protein is involved in type B pili (HifA) assembly. The protein is Chaperone protein HifB (hifB) of Haemophilus influenzae.